The following is a 641-amino-acid chain: MDTTLQDPLVGQVLDGRYRVDARIAVGGMATVYRAVDTRLDRVLALKVMHPSLAADASFVERFIREAKSVARLAHPNVVQVFDQGTDGAYVYLAMEYIAGCTLRDVLRERGALQPRAALDILEPVLAALGAAHRAGFVHRDMKPENVLIGDDGRVKVADFGLVRAVDSVTNTTGTVLGTVSYLAPEQIEHGTADPRVDVYACGILLYEMLTGEKPHDGDSPAIVLYKHLHDDVPPPSAAVPGMAYELDELVASATARGPEVRPHDAVALLARARDARARLGDEQLDAVPPQALASEHDNADDRTSVIPRALTVRRPLPVNEEDEGADAAHRTSRFRSPPPLPPRGRTALRRGPMAIVIGVLLVLGLGAGVWYINSGQFTKVPPLLAKTEKEARDRLADAGLDAGQVSEAYSDTVERGSVATDPEAGARIRTNDSVSLTLSKGPRTVRVPDLDGYPQDKARSLLEDEGLKPGMSTREFSDSVPAGSVISTEPGKGTEVRAGSAVALTVSKGAPVDVPDVAGDDLEDARAELEEAGLEVKVATERVTSEYDAGRVARQDPGPGGRVAEGDTVTLTLSKGPEMAEVPDVVGDSVGEAREKLEGAGFRVDEDRGLLGLFGDTVKGQSVDGGDSAPKGSTITIEIR.

The region spanning 18-280 (YRVDARIAVG…ARARDARARL (263 aa)) is the Protein kinase domain. Residues 24–32 (IAVGGMATV) and lysine 47 contribute to the ATP site. The Proton acceptor role is filled by aspartate 141. The interval 317 to 347 (LPVNEEDEGADAAHRTSRFRSPPPLPPRGRT) is disordered. 4 consecutive PASTA domains span residues 375–441 (SGQF…TLSK), 442–508 (GPRT…LTVS), 509–576 (KGAP…TLSK), and 577–641 (GPEM…IEIR). The segment at 469–494 (KPGMSTREFSDSVPAGSVISTEPGKG) is disordered.

It belongs to the protein kinase superfamily. Ser/Thr protein kinase family. In terms of processing, autophosphorylated on threonine residue(s).

The enzyme catalyses L-seryl-[protein] + ATP = O-phospho-L-seryl-[protein] + ADP + H(+). The catalysed reaction is L-threonyl-[protein] + ATP = O-phospho-L-threonyl-[protein] + ADP + H(+). This Streptomyces toyocaensis protein is Serine/threonine-protein kinase PK-1 (spk1).